The primary structure comprises 546 residues: Thermosome subunit beta (546 aa).

The protein belongs to the TCP-1 chaperonin family. As to quaternary structure, forms a Heterooligomeric complex of two stacked eight-membered rings.

In terms of biological role, molecular chaperone; binds unfolded polypeptides in vitro, and has a weak ATPase activity. In Thermococcus kodakarensis (strain ATCC BAA-918 / JCM 12380 / KOD1) (Pyrococcus kodakaraensis (strain KOD1)), this protein is Thermosome subunit beta (thsB).